A 342-amino-acid polypeptide reads, in one-letter code: Ribosomal RNA small subunit methyltransferase C (342 aa).

The protein belongs to the methyltransferase superfamily. RsmC family. Monomer.

The protein resides in the cytoplasm. It carries out the reaction guanosine(1207) in 16S rRNA + S-adenosyl-L-methionine = N(2)-methylguanosine(1207) in 16S rRNA + S-adenosyl-L-homocysteine + H(+). Specifically methylates the guanine in position 1207 of 16S rRNA in the 30S particle. The protein is Ribosomal RNA small subunit methyltransferase C of Salmonella paratyphi B (strain ATCC BAA-1250 / SPB7).